Consider the following 108-residue polypeptide: MTVARSLLLFVLAALLEIGGAWLVWQGIREHKGWIWVGLGVISLGLYGLVATMQPDANFGRILAAYGGIFVAGSLLWAVVMDGFRPDRFDIAGALICLVGVGVIMYAR.

The next 4 helical transmembrane spans lie at 8 to 28 (LLFV…WQGI), 33 to 53 (GWIW…VATM), 62 to 82 (ILAA…VVMD), and 87 to 107 (DRFD…IMYA).

This sequence belongs to the UPF0060 family.

It localises to the cell membrane. This is UPF0060 membrane protein RER_49640 from Rhodococcus erythropolis (strain PR4 / NBRC 100887).